The sequence spans 512 residues: FAD-linked oxidoreductase iacH (512 aa).

The first 22 residues, 1-22, serve as a signal peptide directing secretion; it reads MVSLKACVVAYGFTLLPALVSG. Residues Asn-39, Asn-55, Asn-69, Asn-210, Asn-217, Asn-278, Asn-295, and Asn-367 are each glycosylated (N-linked (GlcNAc...) asparagine). An FAD-binding PCMH-type domain is found at 77–248; it reads LDTPDVQLVV…TSLEKKIYPG (172 aa).

This sequence belongs to the oxygen-dependent FAD-linked oxidoreductase family. Requires FAD as cofactor.

It functions in the pathway secondary metabolite biosynthesis. In terms of biological role, FAD-linked oxidoreductase; part of the gene cluster that mediates the biosynthesis of iso-A82775C, a enylepoxycyclohexane and biosynthetic precursor of the chloropestolide anticancer natural products. Within the cluster, the prenyltransferase iacE prenylates siccayne to generate pestalodiol E, using dimethylallyl diphosphate (DMAPP) as cosubstrate. The probable oxidoreductase iacF is then involved in the epoxidation of pestalodiol F to pestalodiol F, which is further converted to pestalofone A by the short-chain dehydrogenase/reductase iacG. Iso-A82775C is subsequently generated from pestalofone A by the short-chain dehydrogenase/reductase iacC. Iso-A82775C is further condensed with maldoxin via a Diels-Alder reaction to produce the anticancer natural products chloropestolides A to E. The sequence is that of FAD-linked oxidoreductase iacH from Pestalotiopsis fici (strain W106-1 / CGMCC3.15140).